Here is an 899-residue protein sequence, read N- to C-terminus: Protein translocase subunit SecA (899 aa).

ATP is bound by residues glutamine 87, 105-109 (GEGKT), and aspartate 516. Cysteine 884, cysteine 886, cysteine 895, and histidine 896 together coordinate Zn(2+).

This sequence belongs to the SecA family. Monomer and homodimer. Part of the essential Sec protein translocation apparatus which comprises SecA, SecYEG and auxiliary proteins SecDF. Other proteins may also be involved. The cofactor is Zn(2+).

The protein resides in the cell inner membrane. The protein localises to the cytoplasm. The enzyme catalyses ATP + H2O + cellular proteinSide 1 = ADP + phosphate + cellular proteinSide 2.. In terms of biological role, part of the Sec protein translocase complex. Interacts with the SecYEG preprotein conducting channel. Has a central role in coupling the hydrolysis of ATP to the transfer of proteins into and across the cell membrane, serving as an ATP-driven molecular motor driving the stepwise translocation of polypeptide chains across the membrane. The protein is Protein translocase subunit SecA of Borreliella afzelii (strain PKo) (Borrelia afzelii).